The chain runs to 186 residues: Thioredoxin M2, chloroplastic (186 aa).

The N-terminal 72 residues, 1–72 (MAAFTCTSRP…RVSRLRRAVV (72 aa)), are a transit peptide targeting the chloroplast. Residues 73 to 186 (CEAQETTTDI…LTSSLDKFLP (114 aa)) enclose the Thioredoxin domain. Active-site nucleophile residues include C110 and C113. An intrachain disulfide couples C110 to C113.

Belongs to the thioredoxin family. Plant M-type subfamily. In terms of assembly, interacts with G6PD1 and G6PD4. Interacts with PGL3.

The protein localises to the plastid. It is found in the chloroplast stroma. Its function is as follows. Thiol-disulfide oxidoreductase that may participate in various redox reactions. May activate NADP-malate dehydrogenase. The protein is Thioredoxin M2, chloroplastic of Arabidopsis thaliana (Mouse-ear cress).